Reading from the N-terminus, the 145-residue chain is UPF0299 membrane protein plu1549 (145 aa).

Helical transmembrane passes span 6 to 26 (VLIV…CLLT), 34 to 54 (LPII…LLAF), 65 to 85 (GCSL…VGVM), and 95 to 115 (IIPI…IVAY).

This sequence belongs to the UPF0299 family.

The protein resides in the cell inner membrane. The sequence is that of UPF0299 membrane protein plu1549 from Photorhabdus laumondii subsp. laumondii (strain DSM 15139 / CIP 105565 / TT01) (Photorhabdus luminescens subsp. laumondii).